A 366-amino-acid chain; its full sequence is MWPLSHRHLCLAFLLVCVLSAISFFLHIHQDSIRHGLGLSVLCPDRRLVTPPVAIFCLPGTPMSPNTSSPCPQNSASLSGTWTIYPDGRFGNQMGQYATLLALAQLNGRRAFILPAMHAALAPVFRITLPVLAPEVDSRTPWRELRLHDWMSEEYADLGDPFLKLSGFPCSWTFFHHLREQIRSEFTLHDHLREEAQSVLRRLRLGRSGDRPRTFVGVHVRRGDYLQVMPQRWKGVVGNGAYLREAMDWFRARHEAPVFVVTSNGMDWCRENIDASKGDVMFAGDGQEASPWKDFALLTQCNHTIMTIGTFGFWAAYLAGGDTVYLANFTLPDSEFLKIFKPEAAFLPEWVGINADLSPLWTLAEP.

Topologically, residues 1–8 are cytoplasmic; it reads MWPLSHRH. Residues 9–25 form a helical; Signal-anchor for type II membrane protein membrane-spanning segment; it reads LCLAFLLVCVLSAISFF. Residues 26 to 366 are Lumenal-facing; it reads LHIHQDSIRH…LSPLWTLAEP (341 aa). 3 N-linked (GlcNAc...) asparagine glycosylation sites follow: N66, N302, and N328.

The protein belongs to the glycosyltransferase 11 family.

It is found in the golgi apparatus. It localises to the golgi stack membrane. It carries out the reaction a beta-D-galactosyl-(1-&gt;4)-N-acetyl-beta-D-glucosaminyl derivative + GDP-beta-L-fucose = an alpha-L-Fuc-(1-&gt;2)-beta-D-Gal-(1-&gt;4)-beta-D-GlcNAc derivative + GDP + H(+). It catalyses the reaction a ganglioside GA1 + GDP-beta-L-fucose = a ganglioside Fuc-GA1 + GDP + H(+). The enzyme catalyses a beta-D-Gal-(1-&gt;3)-beta-D-GlcNAc-(1-&gt;3)-beta-D-Gal-(1-&gt;4)-beta-D-Glc-(1&lt;-&gt;1')-Cer(d18:1(4E)) + GDP-beta-L-fucose = alpha-L-fucosyl-(1-&gt;2)- beta-D-galactosyl-(1-&gt;3)-N-acetyl-beta-D-glucosaminyl-(1-&gt;3)-beta-D-galactosyl-(1-&gt;4)-beta-D-glucosyl-(1&lt;-&gt;1')-N-acylsphing-4-enine + GDP + H(+). The catalysed reaction is a neolactoside nLc4Cer(d18:1(4E)) + GDP-beta-L-fucose = a neolactoside IV(2)-alpha-Fuc-nLc4Cer(d18:1(4E)) + GDP + H(+). It carries out the reaction a ganglioside GM1 + GDP-beta-L-fucose = a ganglioside Fuc-GM1 + GDP + H(+). It catalyses the reaction beta-D-galactosyl-(1-&gt;3)-N-acetyl-D-galactosamine + GDP-beta-L-fucose = alpha-L-fucosyl-(1-&gt;2)-beta-D-galactosyl-(1-&gt;3)-N-acetyl-D-galactosamine + GDP + H(+). It participates in protein modification; protein glycosylation. In terms of biological role, catalyzes the transfer of L-fucose, from a guanosine diphosphate-beta-L-fucose, to the terminal galactose residue of glycoconjugates through an alpha(1,2) linkage leading to H antigen synthesis that is an intermediate substrate in the synthesis of ABO blood group antigens. H antigen is essential for maturation of the glomerular layer of the main olfactory bulb, in cell migration and early cell-cell contacts during tumor associated angiogenesis. Preferentially fucosylates soluble lactose and to a lesser extent fucosylates glycolipids gangliosides GA1 and GM1a. This is Galactoside alpha-(1,2)-fucosyltransferase 1 from Aotus nancymaae (Ma's night monkey).